The chain runs to 392 residues: MNIHEYQGKGILKQFGVAVPKGIVAFSAEEAKQAAEQLFEEQSSPVVVVKAQIHAGGRGKAGGVKLAKSPEEVFEIAQKMLGATLVTHQTGPEGKEVRRLLIEEGMNIDKEFYLGITLDRTTSSNVLMVSTEGGMEIEKVAEETPEKLLKIHVDPVYGLQGFQARKAAFFLGLQGEQFRNGVKFIEALYNAYTTIDASLAEINPLVITKEGRVLALDAKINFDDNALYRHSDFHDLRDITEEDPLEYEASKSNLNYVRLDGNVGCMVNGAGLAMGTMDLIQLSGGRPANFLDVGGGASSKTVEEGFKIILGDKNVKAILVNIFGGIVRCDRVAGGIIEAAKNIGLKVPVIVRLEGTNATEAQKMLDESGLNLISAKGLRDAAEKVQKALATA.

The ATP-grasp domain occupies 9–248 (KGILKQFGVA…ITEEDPLEYE (240 aa)). ATP is bound by residues lysine 50, 57–59 (GRG), glutamate 103, methionine 106, and glutamate 111. Asparagine 203 and aspartate 217 together coordinate Mg(2+). Substrate is bound by residues asparagine 268 and 325 to 327 (GIV).

The protein belongs to the succinate/malate CoA ligase beta subunit family. As to quaternary structure, heterotetramer of two alpha and two beta subunits. It depends on Mg(2+) as a cofactor.

It carries out the reaction succinate + ATP + CoA = succinyl-CoA + ADP + phosphate. The catalysed reaction is GTP + succinate + CoA = succinyl-CoA + GDP + phosphate. The protein operates within carbohydrate metabolism; tricarboxylic acid cycle; succinate from succinyl-CoA (ligase route): step 1/1. Functionally, succinyl-CoA synthetase functions in the citric acid cycle (TCA), coupling the hydrolysis of succinyl-CoA to the synthesis of either ATP or GTP and thus represents the only step of substrate-level phosphorylation in the TCA. The beta subunit provides nucleotide specificity of the enzyme and binds the substrate succinate, while the binding sites for coenzyme A and phosphate are found in the alpha subunit. This is Succinate--CoA ligase [ADP-forming] subunit beta from Chlorobaculum tepidum (strain ATCC 49652 / DSM 12025 / NBRC 103806 / TLS) (Chlorobium tepidum).